A 131-amino-acid polypeptide reads, in one-letter code: MTQAVEYKGLGRRKSSVARVIIRPGKGEFHINKRPAREYLTSDLYLKDANQPFVLTETFQKFDTFVNVKGGGLNGQAGAIRLGIARALLHASPDYRTKLKAEGMLTRDARIKERKKPGLRAARRARQFSKR.

Belongs to the universal ribosomal protein uS9 family.

This Mycoplasmopsis synoviae (strain 53) (Mycoplasma synoviae) protein is Small ribosomal subunit protein uS9.